Here is a 116-residue protein sequence, read N- to C-terminus: Large ribosomal subunit protein bL19 (116 aa).

This sequence belongs to the bacterial ribosomal protein bL19 family.

This protein is located at the 30S-50S ribosomal subunit interface and may play a role in the structure and function of the aminoacyl-tRNA binding site. This chain is Large ribosomal subunit protein bL19, found in Blochmanniella pennsylvanica (strain BPEN).